Reading from the N-terminus, the 223-residue chain is Cytidine deaminase 3 (223 aa).

CMP/dCMP-type deaminase domains follow at residues 21–154 and 184–223; these read TEPM…FSPD and SDCSHLKCKALAAANNSFSPYTNSPSGVALQDDDGNWYRG. 62-64 serves as a coordination point for substrate; that stretch reads NVE. Residue His-75 coordinates Zn(2+). Glu-77 (proton donor) is an active-site residue. The Zn(2+) site is built by Cys-110 and Cys-113.

This sequence belongs to the cytidine and deoxycytidylate deaminase family. In terms of assembly, homodimer. Zn(2+) is required as a cofactor.

It catalyses the reaction cytidine + H2O + H(+) = uridine + NH4(+). The enzyme catalyses 2'-deoxycytidine + H2O + H(+) = 2'-deoxyuridine + NH4(+). In terms of biological role, this enzyme scavenges exogenous and endogenous cytidine and 2'-deoxycytidine for UMP synthesis. The polypeptide is Cytidine deaminase 3 (CDA3) (Arabidopsis thaliana (Mouse-ear cress)).